Reading from the N-terminus, the 343-residue chain is MLVKEFDYHLPEELIARYPAPERDGSRLMLLNRESGTIGHGLFRDIADHLRPGDLLVLNDTRVIPARLFGRKATGGRVEIFLVRRQETQAERWSCLMRSSKGMRPGQLITLAGAMTALVVERLEPEGWLLEFQGAEPFSVWLEREGEMPLPPYLQRPAESGDQLRYQTVFARSAGAVAAPTAGLHFTPELLERLAERGVATACLTLHTGPGTFQPLRVERVQDHRIHSERYHISAETCQAIAETKQRGGRVVAVGTTSARTLEYAADEKGGLCPGSGDADIFIYPGYRFRVVDALVTNFHLPESTLIMLVSAFAGKEYVFHAYHEAARLGYRFYSYGDAMFIE.

It belongs to the QueA family. As to quaternary structure, monomer.

It localises to the cytoplasm. It catalyses the reaction 7-aminomethyl-7-carbaguanosine(34) in tRNA + S-adenosyl-L-methionine = epoxyqueuosine(34) in tRNA + adenine + L-methionine + 2 H(+). It participates in tRNA modification; tRNA-queuosine biosynthesis. In terms of biological role, transfers and isomerizes the ribose moiety from AdoMet to the 7-aminomethyl group of 7-deazaguanine (preQ1-tRNA) to give epoxyqueuosine (oQ-tRNA). The polypeptide is S-adenosylmethionine:tRNA ribosyltransferase-isomerase (Pelobacter propionicus (strain DSM 2379 / NBRC 103807 / OttBd1)).